A 167-amino-acid polypeptide reads, in one-letter code: NADH-quinone oxidoreductase subunit B (167 aa).

Cysteine 40, cysteine 41, cysteine 105, and cysteine 134 together coordinate [4Fe-4S] cluster.

The protein belongs to the complex I 20 kDa subunit family. As to quaternary structure, NDH-1 is composed of 14 different subunits. Subunits NuoB, C, D, E, F, and G constitute the peripheral sector of the complex. Requires [4Fe-4S] cluster as cofactor.

It localises to the cell inner membrane. The enzyme catalyses a quinone + NADH + 5 H(+)(in) = a quinol + NAD(+) + 4 H(+)(out). In terms of biological role, NDH-1 shuttles electrons from NADH, via FMN and iron-sulfur (Fe-S) centers, to quinones in the respiratory chain. The immediate electron acceptor for the enzyme in this species is believed to be ubiquinone. Couples the redox reaction to proton translocation (for every two electrons transferred, four hydrogen ions are translocated across the cytoplasmic membrane), and thus conserves the redox energy in a proton gradient. In Campylobacter jejuni (strain RM1221), this protein is NADH-quinone oxidoreductase subunit B.